The sequence spans 27 residues: Caerulein precursor fragment R5 (27 aa).

In terms of tissue distribution, expressed by the skin glands.

The protein localises to the secreted. Its function is as follows. Antimicrobial peptide. This Xenopus ruwenzoriensis (Uganda clawed frog) protein is Caerulein precursor fragment R5.